We begin with the raw amino-acid sequence, 230 residues long: MTTLTARPEAITFDPQQSALIVVDMQNAYATPGGYLDLAGFDVSTTRPVIANIQTAVTAARAAGMLIIWFQNGWDEQYVEAGGPGSPNFHKSNALKTMRKQPQLQGKLLAKGSWDYQLVDELVPQPGDIVLPKPRYSGFFNTPLDSILRSRGIRHLVFTGIATNVCVESTLRDGFFLEYFGVVLEDATHQAGPEFAQKAALFNIETFFGWVSDVETFCDALSPTSFAHIA.

Asp-24 (proton acceptor) is an active-site residue. Lys-133 is a catalytic residue. Cys-166 acts as the Nucleophile in catalysis.

Belongs to the isochorismatase family. RutB subfamily.

The catalysed reaction is (Z)-3-ureidoacrylate + H2O + H(+) = (Z)-3-aminoacrylate + NH4(+) + CO2. It carries out the reaction (Z)-3-ureidoacrylate + H2O = (Z)-3-aminoacrylate + carbamate + H(+). The enzyme catalyses (Z)-2-methylureidoacrylate + H2O + H(+) = (Z)-2-methylaminoacrylate + NH4(+) + CO2. Hydrolyzes ureidoacrylate to form aminoacrylate and carbamate. The carbamate hydrolyzes spontaneously, thereby releasing one of the nitrogen atoms of the pyrimidine ring as ammonia and one of its carbon atoms as CO2. The polypeptide is Ureidoacrylate amidohydrolase RutB (Escherichia coli (strain B / BL21-DE3)).